The primary structure comprises 191 residues: Protein GrpE (191 aa).

This sequence belongs to the GrpE family. Homodimer.

It is found in the cytoplasm. Its function is as follows. Participates actively in the response to hyperosmotic and heat shock by preventing the aggregation of stress-denatured proteins, in association with DnaK and GrpE. It is the nucleotide exchange factor for DnaK and may function as a thermosensor. Unfolded proteins bind initially to DnaJ; upon interaction with the DnaJ-bound protein, DnaK hydrolyzes its bound ATP, resulting in the formation of a stable complex. GrpE releases ADP from DnaK; ATP binding to DnaK triggers the release of the substrate protein, thus completing the reaction cycle. Several rounds of ATP-dependent interactions between DnaJ, DnaK and GrpE are required for fully efficient folding. The protein is Protein GrpE of Nitratidesulfovibrio vulgaris (strain ATCC 29579 / DSM 644 / CCUG 34227 / NCIMB 8303 / VKM B-1760 / Hildenborough) (Desulfovibrio vulgaris).